The chain runs to 26 residues: Glycyl-poneratoxin (26 aa).

The residue at position 25 (Arg25) is an Arginine amide; in delta-paraponeritoxin-Pc1a.

In terms of processing, the glycine-PoTx is a non-amidated form of poneratoxin, with an extra-Gly at C-terminus. This loss of amidation does not alter toxin activity on Nav1.7/SCN9A. Expressed by the venom gland.

It localises to the secreted. Functionally, toxin that causes pain in vertebrates by targeting tetrodotoxin (TTX)-sensitive sodium channels in peripheral sensory neurons. Also blocks synaptic transmission and stimulates smooth muscle contraction. Converts the normally rapidly activating and inactivating sodium channel current into one that does not inactivate. Is active on both Nav1.6/SCN8A and Nav1.7/SCN9A sodium channels, with a much potent activity on Nav1.6/SCN8A (EC(50)=97 nM on human channels) than on Nav1.7/SCN9A (EC(50)=2.3 uM on human and EC(50)=1.8 uM on mouse channels). On these channels, causes a sustained current, a reduction in peak current amplitude and a hyperpolarising shift. Modulates Nav1.7/SCN9A in a non-competitive manner with TTX or tetracaine. Toxin-induced persistant current is very slowly reversible with repeated wash steps over 30 minutes. In vivo, shallow intraplantar injection in mice causes immediate, long-lasting and near-maximal nocifensive behaviors, which decrease with coinjection of TTX. When tested on insects, causes paralysis but not mortality at high doses. The protein is Glycyl-poneratoxin of Paraponera clavata (Bullet ant).